A 200-amino-acid polypeptide reads, in one-letter code: Small ribosomal subunit protein uS4 (200 aa).

Positions 20–41 (SGTGKELEKRPYAPGQHGPNQR) are disordered. One can recognise an S4 RNA-binding domain in the interval 92–155 (ARLDAVVYSL…LKLDIIAESV (64 aa)).

This sequence belongs to the universal ribosomal protein uS4 family. Part of the 30S ribosomal subunit. Contacts protein S5. The interaction surface between S4 and S5 is involved in control of translational fidelity.

In terms of biological role, one of the primary rRNA binding proteins, it binds directly to 16S rRNA where it nucleates assembly of the body of the 30S subunit. Its function is as follows. With S5 and S12 plays an important role in translational accuracy. This Staphylococcus saprophyticus subsp. saprophyticus (strain ATCC 15305 / DSM 20229 / NCIMB 8711 / NCTC 7292 / S-41) protein is Small ribosomal subunit protein uS4.